A 502-amino-acid chain; its full sequence is Glycerol kinase (502 aa).

ADP is bound at residue threonine 15. 3 residues coordinate ATP: threonine 15, threonine 16, and serine 17. Residue threonine 15 coordinates sn-glycerol 3-phosphate. Arginine 19 is an ADP binding site. Positions 85, 86, and 137 each coordinate sn-glycerol 3-phosphate. Residues arginine 85, glutamate 86, and tyrosine 137 each contribute to the glycerol site. Histidine 233 bears the Phosphohistidine; by HPr mark. Aspartate 247 is a binding site for sn-glycerol 3-phosphate. Residues aspartate 247 and glutamine 248 each coordinate glycerol. Positions 269 and 312 each coordinate ADP. Residues threonine 269, glycine 312, glutamine 316, and glycine 413 each contribute to the ATP site. ADP is bound by residues glycine 413 and asparagine 417.

It belongs to the FGGY kinase family. As to quaternary structure, homotetramer and homodimer (in equilibrium). Post-translationally, the phosphoenolpyruvate-dependent sugar phosphotransferase system (PTS), including enzyme I, and histidine-containing protein (HPr) are required for the phosphorylation, which leads to the activation of the enzyme.

It catalyses the reaction glycerol + ATP = sn-glycerol 3-phosphate + ADP + H(+). It participates in polyol metabolism; glycerol degradation via glycerol kinase pathway; sn-glycerol 3-phosphate from glycerol: step 1/1. With respect to regulation, activated by phosphorylation and inhibited by fructose 1,6-bisphosphate (FBP). In terms of biological role, key enzyme in the regulation of glycerol uptake and metabolism. Catalyzes the phosphorylation of glycerol to yield sn-glycerol 3-phosphate. The polypeptide is Glycerol kinase (Streptococcus agalactiae serotype Ia (strain ATCC 27591 / A909 / CDC SS700)).